The chain runs to 798 residues: Phenylalanine--tRNA ligase beta subunit (798 aa).

Residues 39-148 enclose the tRNA-binding domain; sequence NPIFDGFLVG…EDIPIGKKIN (110 aa). One can recognise a B5 domain in the interval 402–477; the sequence is SCSNKIKLYH…RIYNYNNIPL (76 aa). Residues Asp-455, Asp-461, and Asp-465 each coordinate Mg(2+). The FDX-ACB domain occupies 704–797; sequence SKYPTSRRDI…LKKKFQVVLR (94 aa).

This sequence belongs to the phenylalanyl-tRNA synthetase beta subunit family. Type 1 subfamily. Tetramer of two alpha and two beta subunits. Mg(2+) serves as cofactor.

It localises to the cytoplasm. The catalysed reaction is tRNA(Phe) + L-phenylalanine + ATP = L-phenylalanyl-tRNA(Phe) + AMP + diphosphate + H(+). The chain is Phenylalanine--tRNA ligase beta subunit (pheT) from Buchnera aphidicola subsp. Schizaphis graminum (strain Sg).